A 312-amino-acid polypeptide reads, in one-letter code: Malate dehydrogenase (312 aa).

NAD(+) contacts are provided by residues 7–13 and aspartate 34; that span reads GAAGGIG. Substrate is bound by residues arginine 81 and arginine 87. Residues asparagine 94 and 117-119 each bind NAD(+); that span reads ITN. Asparagine 119 and arginine 153 together coordinate substrate. The Proton acceptor role is filled by histidine 177. Position 227 (methionine 227) interacts with NAD(+).

The protein belongs to the LDH/MDH superfamily. MDH type 1 family. In terms of assembly, homodimer.

The enzyme catalyses (S)-malate + NAD(+) = oxaloacetate + NADH + H(+). Catalyzes the reversible oxidation of malate to oxaloacetate. This is Malate dehydrogenase from Escherichia coli O6:K15:H31 (strain 536 / UPEC).